The primary structure comprises 711 residues: BCLAF1 and THRAP3 family member 3 (711 aa).

Positions 1 to 15 (MARSRSRSPRWKHRS) are enriched in basic residues. Disordered stretches follow at residues 1–42 (MARS…YRKD) and 48–67 (AWRM…PSRG). Phosphoserine is present on residues Ser-15 and Ser-17. The span at 48–57 (AWRMDSEKHG) shows a compositional bias: basic and acidic residues. Phosphoserine is present on residues Ser-78, Ser-80, and Ser-187. 2 disordered regions span residues 94 to 350 (KPHR…KDSI) and 371 to 404 (EKIK…PSPI). Basic and acidic residues-rich tracts occupy residues 163 to 197 (FRFE…DFET), 204 to 213 (RYPEDRDFRK), 220 to 242 (RPKD…KPEH), 296 to 311 (SDGR…DRKY), 318 to 349 (LNRE…KKDS), and 371 to 383 (EKIK…RKES). Lys-400 participates in a covalent cross-link: Glycyl lysine isopeptide (Lys-Gly) (interchain with G-Cter in SUMO2). Residues Ser-402 and Ser-578 each carry the phosphoserine modification.

This sequence belongs to the BCLAF1/THRAP3 family.

Its subcellular location is the mitochondrion. The polypeptide is BCLAF1 and THRAP3 family member 3 (Homo sapiens (Human)).